We begin with the raw amino-acid sequence, 294 residues long: Large ribosomal subunit protein uL2 (294 aa).

Disordered stretches follow at residues Met1–Lys37 and Gly228–Gln294. The span at Thr10–Glu22 shows a compositional bias: polar residues. Positions Glu23–Lys37 are enriched in basic and acidic residues. The span at Lys264 to Arg285 shows a compositional bias: basic residues.

Belongs to the universal ribosomal protein uL2 family. In terms of assembly, part of the 50S ribosomal subunit. Forms a bridge to the 30S subunit in the 70S ribosome.

Functionally, one of the primary rRNA binding proteins. Required for association of the 30S and 50S subunits to form the 70S ribosome, for tRNA binding and peptide bond formation. It has been suggested to have peptidyltransferase activity; this is somewhat controversial. Makes several contacts with the 16S rRNA in the 70S ribosome. This is Large ribosomal subunit protein uL2 from Synechococcus sp. (strain JA-3-3Ab) (Cyanobacteria bacterium Yellowstone A-Prime).